The chain runs to 542 residues: Glutamyl-tRNA(Gln) amidotransferase subunit B, mitochondrial (542 aa).

This sequence belongs to the GatB/GatE family. GatB subfamily. As to quaternary structure, subunit of the heterotrimeric GatFAB amidotransferase (AdT) complex, composed of A, B and F subunits.

The protein resides in the mitochondrion. The catalysed reaction is L-glutamyl-tRNA(Gln) + L-glutamine + ATP + H2O = L-glutaminyl-tRNA(Gln) + L-glutamate + ADP + phosphate + H(+). Allows the formation of correctly charged Gln-tRNA(Gln) through the transamidation of misacylated Glu-tRNA(Gln) in the mitochondria. The reaction takes place in the presence of glutamine and ATP through an activated gamma-phospho-Glu-tRNA(Gln). This is Glutamyl-tRNA(Gln) amidotransferase subunit B, mitochondrial from Candida glabrata (strain ATCC 2001 / BCRC 20586 / JCM 3761 / NBRC 0622 / NRRL Y-65 / CBS 138) (Yeast).